The chain runs to 123 residues: uncharacterized protein (123 aa).

A disordered region spans residues 100–123 (NKQPKTTHHFSTNSSEYKSRKSKH).

This is an uncharacterized protein from Acanthamoeba polyphaga mimivirus (APMV).